The primary structure comprises 485 residues: Probable serine/threonine-protein kinase nek1 (485 aa).

In terms of domain architecture, Protein kinase spans 12 to 283 (YLIKSQIGSG…TQQILEQVFI (272 aa)). ATP contacts are provided by residues 18 to 26 (IGSGSYGNT) and lysine 41. Aspartate 136 (proton acceptor) is an active-site residue. Residues 354–365 (KNQQQQSPQKLE) show a composition bias toward polar residues. Residues 354 to 419 (KNQQQQSPQK…NNDKNNNINN (66 aa)) form a disordered region. Residues 366-419 (NNNNNNNDNNNNNNNNNNNNNNNNNNNNNNNNNNNNNNNNNNNNNNDKNNNINN) show a composition bias toward low complexity.

It belongs to the protein kinase superfamily. NEK Ser/Thr protein kinase family. NIMA subfamily.

It catalyses the reaction L-seryl-[protein] + ATP = O-phospho-L-seryl-[protein] + ADP + H(+). The catalysed reaction is L-threonyl-[protein] + ATP = O-phospho-L-threonyl-[protein] + ADP + H(+). The protein is Probable serine/threonine-protein kinase nek1 (nek1) of Dictyostelium discoideum (Social amoeba).